Here is a 531-residue protein sequence, read N- to C-terminus: Tubulin-folding cofactor E (531 aa).

In terms of domain architecture, CAP-Gly spans 32–76; the sequence is GDVEGYSGTWIGVDWDQDGDGKHNGSVNGVFYFNGRSQSSASFVR. LRR repeat units lie at residues 84 to 109, 159 to 183, 185 to 213, 233 to 256, 260 to 284, 285 to 308, 318 to 342, 344 to 366, and 474 to 497; these read ITLL…MYVL, LPNL…ALCE, LPAL…NIRV, LPGI…SSSD, FNSL…KLSQ, LPCL…VNGT, FPSL…ALNG, PQLV…GVPR, and VGKL…LFLQ.

This sequence belongs to the TBCE family. In terms of assembly, supercomplex made of cofactors A to E. Cofactors A and D function by capturing and stabilizing tubulin in a quasi-native conformation. Cofactor E binds to the cofactor D-tubulin complex; interaction with cofactor C then causes the release of tubulin polypeptides that are committed to the native state.

Its subcellular location is the cytoplasm. Functionally, essential tubulin-folding protein involved in the tubulin folding pathway. Not essential for cell viability. Probably involved in the binding of alpha-tubulin in the multimeric supercomplex. In Arabidopsis thaliana (Mouse-ear cress), this protein is Tubulin-folding cofactor E (TFCE).